Consider the following 256-residue polypeptide: Agamous-like MADS-box protein AGL18 (256 aa).

The region spanning 1–61 is the MADS-box domain; the sequence is MGRGRIEIKK…GKIYDFSSVC (61 aa). In terms of domain architecture, K-box spans 94–184; sequence NEAVLRNDDS…RKQVEMLGRG (91 aa). The tract at residues 179–232 is disordered; that stretch reads EMLGRGSGPKVLNERPQDSSPEADPESSSSEEDENDNEEHHSDTSLQLGLSSTG. The span at 199-215 shows a compositional bias: acidic residues; that stretch reads PEADPESSSSEEDENDN. Polar residues predominate over residues 222-232; that stretch reads TSLQLGLSSTG.

Mostly expressed in pollen, roots, flowers and siliques, and to a lower extent, in stems and leaves. Expressed in the endosperm and in developing male and female gametophytes. Also present in seedlings.

The protein localises to the nucleus. Its function is as follows. Probable transcription factor involved in the negative regulation of flowering, probably through the photoperiodic pathway. Prevents premature flowering. Downstream regulator of a subset of the MIKC* MADS-controlled genes required during pollen maturation. This chain is Agamous-like MADS-box protein AGL18 (AGL18), found in Arabidopsis thaliana (Mouse-ear cress).